Consider the following 89-residue polypeptide: Acylphosphatase (89 aa).

The 86-residue stretch at 4–89 folds into the Acylphosphatase-like domain; the sequence is CVRCLIAGRV…IPEIQMFEVR (86 aa). Active-site residues include Arg-19 and Asn-37.

The protein belongs to the acylphosphatase family.

It catalyses the reaction an acyl phosphate + H2O = a carboxylate + phosphate + H(+). The sequence is that of Acylphosphatase (acyP) from Nitrosococcus oceani (strain ATCC 19707 / BCRC 17464 / JCM 30415 / NCIMB 11848 / C-107).